The chain runs to 188 residues: Dual specificity protein phosphatase 18 (188 aa).

Residues 19–160 enclose the Tyrosine-protein phosphatase domain; that stretch reads GLSQITSSLY…LIHYEFQLFG (142 aa). A sufficient for mitochondrial localization region spans residues 95-141; that stretch reads MKQGRTLLHCAAGVSRSAALCLAYLMKYHAMSLLDAHTWTKSCRPII. C104 functions as the Phosphocysteine intermediate in the catalytic mechanism.

It belongs to the protein-tyrosine phosphatase family. Non-receptor class dual specificity subfamily.

The protein localises to the cytoplasm. The protein resides in the nucleus. Its subcellular location is the mitochondrion inner membrane. It carries out the reaction O-phospho-L-tyrosyl-[protein] + H2O = L-tyrosyl-[protein] + phosphate. It catalyses the reaction O-phospho-L-seryl-[protein] + H2O = L-seryl-[protein] + phosphate. The enzyme catalyses O-phospho-L-threonyl-[protein] + H2O = L-threonyl-[protein] + phosphate. Can dephosphorylate single and diphosphorylated synthetic MAPK peptides, with preference for the phosphotyrosine and diphosphorylated forms over phosphothreonine. In vitro, dephosphorylates p-nitrophenyl phosphate (pNPP). This chain is Dual specificity protein phosphatase 18 (DUSP18), found in Bos taurus (Bovine).